The sequence spans 370 residues: Histidinol-phosphate aminotransferase 1 (370 aa).

Lys-222 carries the post-translational modification N6-(pyridoxal phosphate)lysine.

The protein belongs to the class-II pyridoxal-phosphate-dependent aminotransferase family. Histidinol-phosphate aminotransferase subfamily. Homodimer. It depends on pyridoxal 5'-phosphate as a cofactor.

The enzyme catalyses L-histidinol phosphate + 2-oxoglutarate = 3-(imidazol-4-yl)-2-oxopropyl phosphate + L-glutamate. Its pathway is amino-acid biosynthesis; L-histidine biosynthesis; L-histidine from 5-phospho-alpha-D-ribose 1-diphosphate: step 7/9. The polypeptide is Histidinol-phosphate aminotransferase 1 (hisC1) (Bacillus anthracis).